A 274-amino-acid polypeptide reads, in one-letter code: Protein bax (274 aa).

Polar residues predominate over residues 32-64 (TTASQKSHLTKASNKQVSSKQEYSRNSAKSSSL). The tract at residues 32–74 (TTASQKSHLTKASNKQVSSKQEYSRNSAKSSSLPDLRKYPSGT) is disordered. 247 to 254 (GYSTKGKS) is an ATP binding site.

The chain is Protein bax (bax) from Escherichia coli (strain K12).